The primary structure comprises 495 residues: MTANNANKKHLLVLGTASHVGKSAIVTALCRIFSADHKVAPFKAQNMSLNSWITVDGKEIGIAQAIQAKAAGVEPTADMNPVLLKPKGDRVSQVILLGEPYADKSAGAYYDSIEETHDVLKGALKRLEAEYDLIVMEGAGGAAEINLYDRDIVNIGTARITDAPIILVGDIERGGVFASLYGTIQLLPEDVRKNVRGLIINKFRGDPAILESGLTELEELTGIPVLGVMPYFKLRIPSEDSVSIGDKSADDGEHYDVDIAVIRLTRISNFTDFEPLEHMAKVRYVDLSDDLGNPDAIIIPGTKNTTSDLNDLVESGMADKIKSFYGMVPILGICGGYQMLGKSIVDSGIEGGESARLDGLGLLDIETVFDAYEKRTVQVTKTVKESGPIFDSIKGEDVKGYEIHMGISSSKRPVFGDDGCADDSGLVIGTYLHGLFDNVNIRRALISYLLEKKGLEFKEEEIPDKDPYDELADVARENLDMNKIYGMIGLEPEKV.

One can recognise a GATase cobBQ-type domain in the interval 256-441 (DVDIAVIRLT…LHGLFDNVNI (186 aa)). Catalysis depends on Cys-334, which acts as the Nucleophile. His-433 is an active-site residue.

This sequence belongs to the CobB/CobQ family. CobQ subfamily.

It participates in cofactor biosynthesis; adenosylcobalamin biosynthesis. Functionally, catalyzes amidations at positions B, D, E, and G on adenosylcobyrinic A,C-diamide. NH(2) groups are provided by glutamine, and one molecule of ATP is hydrogenolyzed for each amidation. This Methanococcoides burtonii (strain DSM 6242 / NBRC 107633 / OCM 468 / ACE-M) protein is Probable cobyric acid synthase.